The sequence spans 484 residues: Arginyl-tRNA--protein transferase 1 (484 aa).

Belongs to the R-transferase family.

The enzyme catalyses an N-terminal L-alpha-aminoacyl-[protein] + L-arginyl-tRNA(Arg) = an N-terminal L-arginyl-L-aminoacyl-[protein] + tRNA(Arg) + H(+). Involved in the post-translational conjugation of arginine to the N-terminal aspartate or glutamate of a protein. This arginylation is required for degradation of the protein via the ubiquitin pathway. Does not arginylate cysteine residues. The polypeptide is Arginyl-tRNA--protein transferase 1 (Ate1) (Drosophila melanogaster (Fruit fly)).